The chain runs to 23 residues: Alyteserin-1c (23 aa).

Residue serine 23 is modified to Serine amide.

Expressed by the skin glands.

It is found in the secreted. The protein localises to the target cell membrane. Functionally, antibacterial peptide with amphipathic alpha-helical structure that shows selective growth-inhibitory activity against Gram-negative bacteria but low hemolytic activity against human erythrocytes (LC(50)=145-220 uM). It is moderately active against the Gram-negative bacteria E.coli (MIC=25 uM), K.pneumoniae (MIC=50 uM), P.aeruginosa (MIC=25 uM), A.baumannii (MIC=6 uM), and is weaky active against the Gram-positive S.aureus (MIC=100-250 uM). In Alytes obstetricans (Common midwife toad), this protein is Alyteserin-1c.